We begin with the raw amino-acid sequence, 49 residues long: Large ribosomal subunit protein bL33B (49 aa).

This sequence belongs to the bacterial ribosomal protein bL33 family.

The chain is Large ribosomal subunit protein bL33B (rpmG2) from Lactococcus lactis subsp. lactis (strain IL1403) (Streptococcus lactis).